Here is a 199-residue protein sequence, read N- to C-terminus: MADTHRVDRTDRHFQFQSPYEGGRGQGQYEGDRGYGGGGYKSMMPESGPSSTQVLSLLIGVPVVGSLLALAGLLLAGSVIGLMVALPLFLLFSPVIVPAALTIGLAMTGFLASGMFGLTGLSSISWVMNYLRGTRRTVPEQLEYAKRRMADAVGYAGQKGKEMGQHVQNKAQDVKQYDISKPHDTTTKGHETQGRTTAA.

The span at 1–14 shows a compositional bias: basic and acidic residues; the sequence is MADTHRVDRTDRHF. The interval 1-31 is disordered; it reads MADTHRVDRTDRHFQFQSPYEGGRGQGQYEG. At alanine 2 the chain carries N-acetylalanine. A polar region spans residues 2–56; that stretch reads ADTHRVDRTDRHFQFQSPYEGGRGQGQYEGDRGYGGGGYKSMMPESGPSSTQVLS. Over residues 22 to 31 the composition is skewed to gly residues; sequence GGRGQGQYEG. The next 3 helical transmembrane spans lie at 51–71, 72–92, and 96–116; these read STQV…LALA, GLLL…FLLF, and IVPA…SGMF. The tract at residues 57-128 is hydrophobic; sequence LLIGVPVVGS…TGLSSISWVM (72 aa). The disordered stretch occupies residues 159-199; that stretch reads KGKEMGQHVQNKAQDVKQYDISKPHDTTTKGHETQGRTTAA. Residues 172 to 193 show a composition bias toward basic and acidic residues; it reads QDVKQYDISKPHDTTTKGHETQ.

Belongs to the oleosin family.

The protein resides in the lipid droplet. It is found in the membrane. In terms of biological role, may have a structural role to stabilize the lipid body during desiccation of the seed by preventing coalescence of the oil. Probably interacts with both lipid and phospholipid moieties of lipid bodies. May also provide recognition signals for specific lipase anchorage in lipolysis during seedling growth. The protein is Oleosin 21.2 kDa of Arabidopsis thaliana (Mouse-ear cress).